A 908-amino-acid polypeptide reads, in one-letter code: Structural core protein VP2 (908 aa).

Over residues 1–19 the composition is skewed to polar residues; it reads MANPQNRVQTERQQNNSSP. The segment at 1 to 25 is disordered; the sequence is MANPQNRVQTERQQNNSSPYLRGDE.

Belongs to the orbivirus VP3 family.

The protein resides in the virion. This is Structural core protein VP2 (Segment-2) from Ixodes (gulls).